The chain runs to 421 residues: AA11 family lytic polysaccharide monooxygenase (421 aa).

A signal peptide spans 1 to 19; it reads MFSKAFLSAALLGAAAVEG. 3 residues coordinate Cu(+): His-20, His-79, and Glu-93. 3 cysteine pairs are disulfide-bonded: Cys-48-Cys-162, Cys-84-Cys-110, and Cys-201-Cys-235. An N-linked (GlcNAc...) asparagine glycan is attached at Asn-117. The interval 231-349 is disordered; the sequence is GSQACTGTPT…SSSSSSSGAL (119 aa). Positions 247-285 are enriched in low complexity; sequence TAGSSGSSGSSSGSSSGGSSSSAAGSGATAPPAPAVSST. Residues 304–314 show a composition bias toward polar residues; sequence SPAQPTHTSAP. Residues 315–349 show a composition bias toward low complexity; sequence SGGSSSGSGSSSGSNSGSSSGSSSSSSSSSSSGAL.

Belongs to the polysaccharide monooxygenase AA11 family. Cu(2+) serves as cofactor.

In terms of biological role, lytic polysaccharide monooxygenase (LPMO) that depolymerizes chitin via the oxidation of scissile beta-(1-4)-glycosidic bonds, yielding C1 or C4 oxidation products. Catalysis by LPMOs requires the reduction of the active-site copper from Cu(II) to Cu(I) by a reducing agent and H(2)O(2) or O(2) as a cosubstrate. Active on chitin but has no activity on other substrates, including diverse mannans, cellulose and starch (data not shown). Primary chain cleavage yields predominantly aldonic acid oligosaccharides with even-numbered degrees of polymerization. The polypeptide is AA11 family lytic polysaccharide monooxygenase (Aspergillus oryzae (strain ATCC 42149 / RIB 40) (Yellow koji mold)).